The following is a 739-amino-acid chain: NAD(P)H-quinone oxidoreductase subunit 5, chloroplastic (739 aa).

A run of 16 helical transmembrane segments spans residues 9-29, 39-59, 89-109, 125-145, 147-167, 185-205, 224-244, 258-278, 280-300, 327-347, 354-374, 396-416, 425-445, 544-564, 603-623, and 719-739; these read WIIPFLPFPVTISIGLGLLLV, IWAFFSVLLLSIAMVFSADLA, IDPLTSIMLILITTVGIMVLI, FAYMSFFNTSMLGLVTSSNLI, IYIFWELVGMCSYLLIGFWFT, GDFGLLLGILGLYWITGSFEF, LFAALCASLLFVGAVAKSAQF, TPISALIHAATMVAAGIFLVA, LLPLFTVIPYIMNFISLIGII, LGYIMLAPGIGSYRAALFHLI, ALLFLGSGSIIHSMEPIVGYS, TTFFLGTLSLCGMPPLACFWS, WLYSPIFAIIAWSTAGLTAFY, LFPMLVLVLFTLFIGFIGIPF, IYSVTISFLGIFLAYIFYGSV, and YIFLYAFSVSICLIIYYFFSF.

The protein belongs to the complex I subunit 5 family. NDH is composed of at least 16 different subunits, 5 of which are encoded in the nucleus.

The protein localises to the plastid. The protein resides in the chloroplast thylakoid membrane. The catalysed reaction is a plastoquinone + NADH + (n+1) H(+)(in) = a plastoquinol + NAD(+) + n H(+)(out). It carries out the reaction a plastoquinone + NADPH + (n+1) H(+)(in) = a plastoquinol + NADP(+) + n H(+)(out). In terms of biological role, NDH shuttles electrons from NAD(P)H:plastoquinone, via FMN and iron-sulfur (Fe-S) centers, to quinones in the photosynthetic chain and possibly in a chloroplast respiratory chain. The immediate electron acceptor for the enzyme in this species is believed to be plastoquinone. Couples the redox reaction to proton translocation, and thus conserves the redox energy in a proton gradient. This is NAD(P)H-quinone oxidoreductase subunit 5, chloroplastic (ndhF) from Acorus calamus var. americanus (American sweet flag).